We begin with the raw amino-acid sequence, 308 residues long: Glutaminase (308 aa).

The substrate site is built by Ser-66, Asn-117, Glu-161, Asn-168, Tyr-192, Tyr-244, and Val-262.

The protein belongs to the glutaminase family. As to quaternary structure, homotetramer.

It carries out the reaction L-glutamine + H2O = L-glutamate + NH4(+). This is Glutaminase from Enterobacter sp. (strain 638).